Reading from the N-terminus, the 251-residue chain is DNA-directed RNA polymerase I subunit rpa34 (251 aa).

2 disordered regions span residues 1 to 66 (MAKS…VLTT) and 163 to 251 (PLVP…KEKN). Residues 8-17 (VNEESSEDES) are compositionally biased toward acidic residues. At Ser-13 the chain carries Phosphoserine. A compositionally biased stretch (basic and acidic residues) spans 23 to 32 (EDQHSSKEPE). Polar residues predominate over residues 34–46 (SVESNNHGESNAQ). Basic and acidic residues-rich tracts occupy residues 190–201 (AEPKSGIKEHIL) and 212–237 (LQNK…EEKP). Residues 238 to 251 (KKKKQKKSSKKEKN) are compositionally biased toward basic residues.

The protein belongs to the eukaryotic RPA34 RNA polymerase subunit family. As to quaternary structure, component of the RNA polymerase I (Pol I) complex.

The protein localises to the nucleus. The protein resides in the nucleolus. In terms of biological role, DNA-dependent RNA polymerase catalyzes the transcription of DNA into RNA using the four ribonucleoside triphosphates as substrates. Component of RNA polymerase I which synthesizes ribosomal RNA precursors. This is DNA-directed RNA polymerase I subunit rpa34 (rpa34) from Schizosaccharomyces pombe (strain 972 / ATCC 24843) (Fission yeast).